The following is a 180-amino-acid chain: Ribulose bisphosphate carboxylase small subunit, chloroplastic (180 aa).

Residues 1–57 (MASVVASAAVVTPFAASAASTTKSSQIVSVQAGLKAGVFGGKSEWQTKTQTNGSRVS) constitute a chloroplast transit peptide.

It belongs to the RuBisCO small chain family. Heterohexadecamer of 8 large and 8 small subunits.

The protein resides in the plastid. It is found in the chloroplast. Its function is as follows. RuBisCO catalyzes two reactions: the carboxylation of D-ribulose 1,5-bisphosphate, the primary event in carbon dioxide fixation, as well as the oxidative fragmentation of the pentose substrate. Both reactions occur simultaneously and in competition at the same active site. Although the small subunit is not catalytic it is essential for maximal activity. This is Ribulose bisphosphate carboxylase small subunit, chloroplastic from Marchantia paleacea (Liverwort).